The chain runs to 405 residues: MNASGSVPLGVDSEVGRLRSVILHRPGDELKRLTPRNNDELLFDALPWVDRAQEEHDQFATVLRERGVEVLLLSDLLTEALEVSGAARIQGIAAAVDARKIGHALGQHLAAYLRKVEPKELSSILTAGMTFDELPIDAGSTSLVRRMHHGGDFVIDPLPNLLFTRDSSFWVGPRVIITSLALSARARESSITDLVYAHHPRFKGVRRAYESHTAPVEGGDVLLLAPGVIAIGVGERTSPAGAEALARSVFDDGLAHTVLVVPIEQRRASMHLDTVCTMVEADAVVMYPAIQDTLAAFTLRKEDDGVSIRGATPFLEAAADAMGIGKLRVIDTGLDTVTAEREQWDDGNNTLAVEPGVVVAYERNVETNARLEASGIEVLRIAGSELGSGRGGPRCMSCPIARDPL.

The active-site Amidino-cysteine intermediate is cysteine 395.

It belongs to the arginine deiminase family.

It is found in the cytoplasm. The enzyme catalyses L-arginine + H2O = L-citrulline + NH4(+). Its pathway is amino-acid degradation; L-arginine degradation via ADI pathway; carbamoyl phosphate from L-arginine: step 1/2. The polypeptide is Arginine deiminase (Rhodococcus erythropolis (strain PR4 / NBRC 100887)).